The following is a 429-amino-acid chain: ATP-dependent Clp protease ATP-binding subunit ClpX (429 aa).

A ClpX-type ZB domain is found at 1–54 (MARSKSQKIEGCSFCGRTRAEAEGKIISAKSVAICFECSKICHNLFKEESDKPA). Residues Cys12, Cys15, Cys35, and Cys38 each contribute to the Zn(2+) site. 119 to 126 (PTGSGKTL) lines the ATP pocket.

It belongs to the ClpX chaperone family. In terms of assembly, component of the ClpX-ClpP complex. Forms a hexameric ring that, in the presence of ATP, binds to fourteen ClpP subunits assembled into a disk-like structure with a central cavity, resembling the structure of eukaryotic proteasomes.

In terms of biological role, ATP-dependent specificity component of the Clp protease. It directs the protease to specific substrates. Can perform chaperone functions in the absence of ClpP. The protein is ATP-dependent Clp protease ATP-binding subunit ClpX of Borrelia duttonii (strain Ly).